Consider the following 660-residue polypeptide: Bifunctional polymyxin resistance protein ArnA (660 aa).

The tract at residues 1 to 304 is formyltransferase ArnAFT; sequence MKTVVFAYHD…TLGLVQGSRL (304 aa). 86–88 serves as a coordination point for (6R)-10-formyltetrahydrofolate; the sequence is HLI. Catalysis depends on histidine 104, which acts as the Proton donor; for formyltransferase activity. (6R)-10-formyltetrahydrofolate is bound by residues arginine 114 and 136-140; that span reads VKRAD. The dehydrogenase ArnADH stretch occupies residues 314–660; sequence RRTRVLILGV…RTVDLTDKPS (347 aa). NAD(+) contacts are provided by residues aspartate 347 and 368–369; that span reads DI. Residues alanine 393, tyrosine 398, and 432–433 contribute to the UDP-alpha-D-glucuronate site; that span reads TS. The active-site Proton acceptor; for decarboxylase activity is the glutamate 434. Residues arginine 460, asparagine 492, 526–535, and tyrosine 613 contribute to the UDP-alpha-D-glucuronate site; that span reads KLIDGGKQKR. Arginine 619 acts as the Proton donor; for decarboxylase activity in catalysis.

This sequence in the N-terminal section; belongs to the Fmt family. UDP-L-Ara4N formyltransferase subfamily. The protein in the C-terminal section; belongs to the NAD(P)-dependent epimerase/dehydratase family. UDP-glucuronic acid decarboxylase subfamily. Homohexamer, formed by a dimer of trimers.

It carries out the reaction UDP-alpha-D-glucuronate + NAD(+) = UDP-beta-L-threo-pentopyranos-4-ulose + CO2 + NADH. The enzyme catalyses UDP-4-amino-4-deoxy-beta-L-arabinose + (6R)-10-formyltetrahydrofolate = UDP-4-deoxy-4-formamido-beta-L-arabinose + (6S)-5,6,7,8-tetrahydrofolate + H(+). The protein operates within nucleotide-sugar biosynthesis; UDP-4-deoxy-4-formamido-beta-L-arabinose biosynthesis; UDP-4-deoxy-4-formamido-beta-L-arabinose from UDP-alpha-D-glucuronate: step 1/3. It participates in nucleotide-sugar biosynthesis; UDP-4-deoxy-4-formamido-beta-L-arabinose biosynthesis; UDP-4-deoxy-4-formamido-beta-L-arabinose from UDP-alpha-D-glucuronate: step 3/3. It functions in the pathway bacterial outer membrane biogenesis; lipopolysaccharide biosynthesis. Bifunctional enzyme that catalyzes the oxidative decarboxylation of UDP-glucuronic acid (UDP-GlcUA) to UDP-4-keto-arabinose (UDP-Ara4O) and the addition of a formyl group to UDP-4-amino-4-deoxy-L-arabinose (UDP-L-Ara4N) to form UDP-L-4-formamido-arabinose (UDP-L-Ara4FN). The modified arabinose is attached to lipid A and is required for resistance to polymyxin and cationic antimicrobial peptides. This Escherichia coli O81 (strain ED1a) protein is Bifunctional polymyxin resistance protein ArnA.